Reading from the N-terminus, the 293-residue chain is Pyridoxal 5'-phosphate synthase subunit PdxS (293 aa).

Asp23 is a binding site for D-ribose 5-phosphate. Lys80 acts as the Schiff-base intermediate with D-ribose 5-phosphate in catalysis. Residue Gly152 participates in D-ribose 5-phosphate binding. Position 164 (Arg164) interacts with D-glyceraldehyde 3-phosphate. Residues Gly213 and 234-235 (GS) each bind D-ribose 5-phosphate.

Belongs to the PdxS/SNZ family. As to quaternary structure, in the presence of PdxT, forms a dodecamer of heterodimers.

The catalysed reaction is aldehydo-D-ribose 5-phosphate + D-glyceraldehyde 3-phosphate + L-glutamine = pyridoxal 5'-phosphate + L-glutamate + phosphate + 3 H2O + H(+). It participates in cofactor biosynthesis; pyridoxal 5'-phosphate biosynthesis. Its function is as follows. Catalyzes the formation of pyridoxal 5'-phosphate from ribose 5-phosphate (RBP), glyceraldehyde 3-phosphate (G3P) and ammonia. The ammonia is provided by the PdxT subunit. Can also use ribulose 5-phosphate and dihydroxyacetone phosphate as substrates, resulting from enzyme-catalyzed isomerization of RBP and G3P, respectively. The protein is Pyridoxal 5'-phosphate synthase subunit PdxS of Dehalococcoides mccartyi (strain ATCC BAA-2266 / KCTC 15142 / 195) (Dehalococcoides ethenogenes (strain 195)).